The sequence spans 302 residues: MRRWAWAAVVVLLGPQLVLLGGVGARREAQRTQQPGQRADPPNATASASSREGLPEAPKPSQASGPEFSDAHMTWLNFVRRPDDGALRKRCGSRDKKPRDLFGPPGPPGAEVTAETLLHEFQELLKEATERRFSGLLDPLLPQGAGLRLVGEAFHCRLQGPRRVDKRTLVELHGFQAPAAQGAFLRGSGLSLASGRFTAPVSGIFQFSASLHVDHSELQGKARLRARDVVCVLICIESLCQRHTCLEAVSGLESNSRVFTLQVQGLLQLQAGQYASVFVDNGSGAVLTIQAGSSFSGLLLGT.

The first 20 residues, 1 to 20 (MRRWAWAAVVVLLGPQLVLL), serve as a signal peptide directing secretion. 2 disordered regions span residues 28–68 (EAQR…GPEF) and 86–110 (ALRK…PPGA). Asn43 carries an N-linked (GlcNAc...) asparagine glycan. Basic and acidic residues predominate over residues 86–100 (ALRKRCGSRDKKPRD). Residues 147-302 (LRLVGEAFHC…SSFSGLLLGT (156 aa)) enclose the C1q domain.

It belongs to the adipolin/erythroferrone family. As to quaternary structure, homomultimer; disulfide-linked. May interact with ERFE. Processed into Adipolin fC1QTNF12 and Adipolin gC1QTNF12 by FURIN. Insulin enhances endogenous C1QTNF12 cleavage. Predominantly expressed by adipose tissues.

It localises to the secreted. Functionally, insulin-sensitizing adipocyte-secreted protein (adipokine) that regulates glucose metabolism in liver and adipose tissue. Promotes glucose uptake in adipocytes and suppresses de novo glucose production in hepatocytes via the PI3K-Akt signaling pathway. Administration lead to reduction of blood glucose. Able to attenuate inflammation in fat tissue. The chain is Adipolin from Homo sapiens (Human).